The primary structure comprises 291 residues: Phosphatidylglycerol--prolipoprotein diacylglyceryl transferase (291 aa).

4 consecutive transmembrane segments (helical) span residues 24 to 44, 64 to 84, 100 to 120, and 125 to 145; these read WYALAYIGGIMLGWLYARALL, FILWVTIAIIVGGRVGYVLFY, WNGGMSFHGGFMGCVAAVILF, and GLPILSLGDVATAVGPIGLFL. Arg147 contributes to the a 1,2-diacyl-sn-glycero-3-phospho-(1'-sn-glycerol) binding site. 3 helical membrane passes run 187–207, 211–231, and 247–267; these read AALEGILLFTILALMIRLGAL, GLVLGSFIALYAMARIVAEFF, and MGMLLSIPMVIIGLAIVYAAW.

This sequence belongs to the Lgt family.

It is found in the cell inner membrane. It carries out the reaction L-cysteinyl-[prolipoprotein] + a 1,2-diacyl-sn-glycero-3-phospho-(1'-sn-glycerol) = an S-1,2-diacyl-sn-glyceryl-L-cysteinyl-[prolipoprotein] + sn-glycerol 1-phosphate + H(+). It participates in protein modification; lipoprotein biosynthesis (diacylglyceryl transfer). In terms of biological role, catalyzes the transfer of the diacylglyceryl group from phosphatidylglycerol to the sulfhydryl group of the N-terminal cysteine of a prolipoprotein, the first step in the formation of mature lipoproteins. The sequence is that of Phosphatidylglycerol--prolipoprotein diacylglyceryl transferase from Nitrobacter winogradskyi (strain ATCC 25391 / DSM 10237 / CIP 104748 / NCIMB 11846 / Nb-255).